Reading from the N-terminus, the 178-residue chain is Large ribosomal subunit protein uL6 (178 aa).

It belongs to the universal ribosomal protein uL6 family. In terms of assembly, part of the 50S ribosomal subunit.

Its function is as follows. This protein binds to the 23S rRNA, and is important in its secondary structure. It is located near the subunit interface in the base of the L7/L12 stalk, and near the tRNA binding site of the peptidyltransferase center. This chain is Large ribosomal subunit protein uL6, found in Streptococcus pneumoniae (strain 70585).